The sequence spans 591 residues: CDK5RAP3 protein homolog (591 aa).

The segment covering 232 to 250 (RAGAPSSAKGPASSASAPP) has biased composition (low complexity). 2 disordered regions span residues 232 to 252 (RAGA…PPAL) and 269 to 303 (TAPP…DAGG). Gly residues predominate over residues 279 to 303 (AGAGASGQGGGIEIDWGDSGGDAGG). Short sequence motifs (shuffled ATG8-binding motif) lie at residues 311–314 (IDWD), 334–337 (INWD), and 369–372 (IDWD). Positions 386 to 401 (NNRAGDVAEGEAAASL) are enriched in low complexity. Residues 386–416 (NNRAGDVAEGEAAASLSGGGGGGASSGDPDD) are disordered.

The protein belongs to the CDK5RAP3 family. Substrate adapter component of the UFM1 ribosome E3 ligase (UREL) complex. Interacts with ATG8 family proteins.

Its function is as follows. Substrate adapter of E3 ligase complexes mediating ufmylation, the covalent attachment of the ubiquitin-like modifier UFM1 to substrate proteins, and which is involved in various processes, such as ribosome recycling and reticulophagy (also called ER-phagy). In Chlamydomonas reinhardtii (Chlamydomonas smithii), this protein is CDK5RAP3 protein homolog.